Reading from the N-terminus, the 253-residue chain is 5'-nucleotidase SurE (253 aa).

A divalent metal cation-binding residues include Asp8, Asp9, Ser39, and Asn95.

It belongs to the SurE nucleotidase family. The cofactor is a divalent metal cation.

The protein resides in the cytoplasm. The enzyme catalyses a ribonucleoside 5'-phosphate + H2O = a ribonucleoside + phosphate. Functionally, nucleotidase that shows phosphatase activity on nucleoside 5'-monophosphates. This is 5'-nucleotidase SurE from Chloroflexus aggregans (strain MD-66 / DSM 9485).